A 118-amino-acid polypeptide reads, in one-letter code: Large ribosomal subunit protein uL18 (118 aa).

Belongs to the universal ribosomal protein uL18 family. In terms of assembly, part of the 50S ribosomal subunit; part of the 5S rRNA/L5/L18/L25 subcomplex. Contacts the 5S and 23S rRNAs.

This is one of the proteins that bind and probably mediate the attachment of the 5S RNA into the large ribosomal subunit, where it forms part of the central protuberance. This chain is Large ribosomal subunit protein uL18, found in Campylobacter concisus (strain 13826).